The sequence spans 430 residues: uncharacterized protein (430 aa).

Helical transmembrane passes span F13–F33, L47–A67, V88–I108, G138–M158, L228–F248, S264–I284, I296–V316, A319–M339, F358–V378, and Y383–L403.

This sequence belongs to the major facilitator superfamily.

It localises to the cell membrane. This is an uncharacterized protein from Bacillus subtilis (strain 168).